Consider the following 428-residue polypeptide: Peptidase B (428 aa).

2 residues coordinate Mn(2+): Lys195 and Asp200. Residue Lys207 is part of the active site. 3 residues coordinate Mn(2+): Asp218, Asp277, and Glu279. Residue Arg281 is part of the active site.

The protein belongs to the peptidase M17 family. In terms of assembly, homohexamer. Requires Mn(2+) as cofactor.

It localises to the cytoplasm. The catalysed reaction is Release of an N-terminal amino acid, Xaa, from a peptide or arylamide. Xaa is preferably Glu or Asp but may be other amino acids, including Leu, Met, His, Cys and Gln.. Its function is as follows. Probably plays an important role in intracellular peptide degradation. This chain is Peptidase B, found in Enterobacter sp. (strain 638).